The chain runs to 797 residues: Short transient receptor potential channel 4-associated protein (797 aa).

An N-acetylalanine modification is found at Ala-2. The segment at 2–400 is interaction with TNFRSF1A; it reads AAAPAAAGAG…VLYVLCVLLM (399 aa).

Component of the DCX(TRPC4AP) E3 ubiquitin ligase complex, at least composed of CUL4A, DDB1, TRPC4AP/TRUSS and RBX1. Interacts with MYC. Constitutively associated with TNFRSF1A. Directly interacts with TRADD, TRAF2, CHUK, IKBKB and IKBKG. Interacts with TRPC1, TRPC4 and TRPC5. Post-translationally, phosphorylated by GSK3B; phosphorylation is required for ubiquitination. In terms of processing, ubiquitinated by a SCF (SKP1-CUL1-F-box protein) E3 ubiquitin-protein ligase containing SKP2, leading to its degradation. Phosphorylation by GSK3B is required for ubiquitination. Widely expressed, with high levels in heart, liver and testis.

The protein resides in the cytoplasm. The protein localises to the perinuclear region. It participates in protein modification; protein ubiquitination. Its function is as follows. Substrate-recognition component of a DCX (DDB1-CUL4-X-box) E3 ubiquitin-protein ligase complex required for cell cycle control. The DCX(TRPC4AP) complex specifically mediates the polyubiquitination and subsequent degradation of MYC as part of the DesCEND (destruction via C-end degrons) pathway. The DesCEND (destruction via C-end degrons) pathway recognizes a C-degron located at the extreme C terminus of target proteins, leading to their ubiquitination and degradation. The DCX(TRPC4AP) complex specifically recognizes proteins with an arginine at the minus 3 position (R-3 motif) at the C-terminus, such as MYC, leading to their ubiquitination and degradation. Also participates in the activation of NFKB1 in response to ligation of TNFRSF1A, possibly by linking TNFRSF1A to the IKK signalosome. Involved in JNK activation via its interaction with TRAF2. Also involved in elevation of endoplasmic reticulum Ca(2+) storage reduction in response to CHRM1. The sequence is that of Short transient receptor potential channel 4-associated protein from Mus musculus (Mouse).